The sequence spans 454 residues: Signal recognition particle protein (454 aa).

GTP is bound by residues 102 to 109 (GLQGTGKT), 184 to 188 (DTAGR), and 242 to 245 (TKMD).

The protein belongs to the GTP-binding SRP family. SRP54 subfamily. In terms of assembly, part of the signal recognition particle protein translocation system, which is composed of SRP and FtsY.

Its subcellular location is the cytoplasm. The enzyme catalyses GTP + H2O = GDP + phosphate + H(+). Involved in targeting and insertion of nascent membrane proteins into the cytoplasmic membrane. Binds to the hydrophobic signal sequence of the ribosome-nascent chain (RNC) as it emerges from the ribosomes. The SRP-RNC complex is then targeted to the cytoplasmic membrane where it interacts with the SRP receptor FtsY. The protein is Signal recognition particle protein of Aquifex aeolicus (strain VF5).